The primary structure comprises 152 residues: Ribosome maturation factor RimP (152 aa).

Belongs to the RimP family.

Its subcellular location is the cytoplasm. Its function is as follows. Required for maturation of 30S ribosomal subunits. The sequence is that of Ribosome maturation factor RimP from Rubrobacter xylanophilus (strain DSM 9941 / JCM 11954 / NBRC 16129 / PRD-1).